A 298-amino-acid chain; its full sequence is N-acetylmuramic acid 6-phosphate etherase (298 aa).

An SIS domain is found at 55–218; that stretch reads IHAQVSGGGR…STGLMIKSGK (164 aa). Glutamate 83 (proton donor) is an active-site residue. Glutamate 114 is an active-site residue.

This sequence belongs to the GCKR-like family. MurNAc-6-P etherase subfamily. As to quaternary structure, homodimer.

It catalyses the reaction N-acetyl-D-muramate 6-phosphate + H2O = N-acetyl-D-glucosamine 6-phosphate + (R)-lactate. It participates in amino-sugar metabolism; 1,6-anhydro-N-acetylmuramate degradation. Its pathway is amino-sugar metabolism; N-acetylmuramate degradation. It functions in the pathway cell wall biogenesis; peptidoglycan recycling. In terms of biological role, specifically catalyzes the cleavage of the D-lactyl ether substituent of MurNAc 6-phosphate, producing GlcNAc 6-phosphate and D-lactate. Together with AnmK, is also required for the utilization of anhydro-N-acetylmuramic acid (anhMurNAc) either imported from the medium or derived from its own cell wall murein, and thus plays a role in cell wall recycling. The sequence is that of N-acetylmuramic acid 6-phosphate etherase from Escherichia coli (strain SMS-3-5 / SECEC).